Here is a 722-residue protein sequence, read N- to C-terminus: MQGQTKSVSFDGREIKLTTGRFAPQAGGSVMIECGDTSVLVTATKSSGREGVDFLPLMCDYEERLYAAGRIPGSFMRREGRPPERATLISRLIDRPMRPLFPGWMRDDIQIVATCLSLDERVPADVLAVTGASMATLMAGIPFQGPMAAVRVGLLGDDFVLNPSYREIERGDLDLVVAGTPDGVVMVEAGANQLSEQDVIEAIDFGYEAITELINAQKEVLKESGIKQEMPKAPEIDDTISTYLDKNCTKSISEVLKNFDQTKEERDNKIEEIKISISAKIDGLKDDNAVKKSLSLNNKLLENSYKALTKKLMREQIIKEGKRVDGRELNEVRAIDADAAVLPNRVHGSALFQRGLTQVLSTATLGTPSDAQEMDDLNPNTDKTYIHHYNFPPYSVGETRPMRTPGRREVGHGALAERALIPVLPAKDTFPYVLRVVSEVLSSNGSTSMASVCGSTLALMDAGVPLKAPVGGAAMGLIKEGKEVRILTDIQGIEDFLGDMDFKVAGTEKGITALQMDMKITGLPIETIGEAINQALPARTHILGKMLDAIETPKDNLSPHAPRLLSFRIDPELIGTVIGPGGRTIKGITERTNTKIDIEDGGIVTIASHDGAAAEEAQRIIEGLTRKVHEGEIFPGSITRIIPIGAFVEILPGKEGMIHISQLSEARVEKVEDVVKVGDQVTVRVREIDNRGRINLTLRGVSQNGGMSNYPEPTPTPVAPLT.

Residues Asp-495 and Asp-501 each contribute to the Mg(2+) site. The KH domain maps to 562 to 621 (PRLLSFRIDPELIGTVIGPGGRTIKGITERTNTKIDIEDGGIVTIASHDGAAAEEAQRII). The S1 motif domain maps to 631–699 (GEIFPGSITR…NRGRINLTLR (69 aa)). The segment at 700–722 (GVSQNGGMSNYPEPTPTPVAPLT) is disordered. Positions 712-722 (EPTPTPVAPLT) are enriched in pro residues.

The protein belongs to the polyribonucleotide nucleotidyltransferase family. Mg(2+) serves as cofactor.

It localises to the cytoplasm. The catalysed reaction is RNA(n+1) + phosphate = RNA(n) + a ribonucleoside 5'-diphosphate. In terms of biological role, involved in mRNA degradation. Catalyzes the phosphorolysis of single-stranded polyribonucleotides processively in the 3'- to 5'-direction. In Prochlorococcus marinus (strain NATL2A), this protein is Polyribonucleotide nucleotidyltransferase.